A 78-amino-acid polypeptide reads, in one-letter code: Large ribosomal subunit protein bL28 (78 aa).

The protein belongs to the bacterial ribosomal protein bL28 family.

This chain is Large ribosomal subunit protein bL28, found in Microcystis aeruginosa (strain NIES-843 / IAM M-2473).